A 488-amino-acid chain; its full sequence is Bifunctional NAD(P)H-hydrate repair enzyme Nnr (488 aa).

The tract at residues 1–214 (MTVLYQNRQI…LSESFFRAVF (214 aa)) is NAD(P)H-hydrate epimerase. Positions 10–211 (IRELERLAVE…RLGLSESFFR (202 aa)) constitute a YjeF N-terminal domain. Residues 57-61 (NNGGD) are NADPHX 1; for epimerase activity. Residues Asn-58 and Asp-121 each coordinate K(+). The interval 125-131 (GSGLSGE) is NADPHX 1; for epimerase activity. Residues Tyr-136 and Asp-154 each coordinate (6S)-NADPHX. Residue Ser-157 participates in K(+) binding. The YjeF C-terminal domain occupies 221–488 (EWKGVFPLLP…FPHLRVLVNP (268 aa)). Residues 221–488 (EWKGVFPLLP…FPHLRVLVNP (268 aa)) form an ADP-dependent (S)-NAD(P)H-hydrate dehydratase region. Gly-317 contacts (6S)-NADPHX. The NADPHX 2; for dehydratase activity stretch occupies residues 363-369 (HPGEASR). Residues 400–404 (KGVGT) and 420–429 (NPGMATGGMG) contribute to the ADP site. Asp-430 is a (6S)-NADPHX binding site.

This sequence in the N-terminal section; belongs to the NnrE/AIBP family. The protein in the C-terminal section; belongs to the NnrD/CARKD family. It depends on K(+) as a cofactor.

The enzyme catalyses (6S)-NADHX + ADP = AMP + phosphate + NADH + H(+). It catalyses the reaction (6S)-NADPHX + ADP = AMP + phosphate + NADPH + H(+). It carries out the reaction (6R)-NADHX = (6S)-NADHX. The catalysed reaction is (6R)-NADPHX = (6S)-NADPHX. In terms of biological role, bifunctional enzyme that catalyzes the epimerization of the S- and R-forms of NAD(P)HX and the dehydration of the S-form of NAD(P)HX at the expense of ADP, which is converted to AMP. This allows the repair of both epimers of NAD(P)HX, a damaged form of NAD(P)H that is a result of enzymatic or heat-dependent hydration. The protein is Bifunctional NAD(P)H-hydrate repair enzyme Nnr (nnr) of Coxiella burnetii (strain RSA 493 / Nine Mile phase I).